The primary structure comprises 804 residues: Tubulin polyglutamylase TTLL13 (804 aa).

The tract at residues 1–41 (MEPNNCKTSESEEDDIEEEESEEECVREESTTPNSTQQALR) is disordered. A coiled-coil region spans residues 4 to 30 (NNCKTSESEEDDIEEEESEEECVREES). The span at 11–26 (SEEDDIEEEESEEECV) shows a compositional bias: acidic residues. The TTL domain occupies 85–430 (RRPLAINLTN…RGCDKKKVIE (346 aa)). Residues Lys-202, 208 to 209 (QG), 230 to 233 (QQYI), and 243 to 245 (KFD) contribute to the ATP site. Residue Gln-208 coordinates a protein. An L-glutamate-binding site is contributed by Arg-269. 291 to 292 (TN) provides a ligand contact to ATP. Positions 293 and 311 each coordinate L-glutamate. Asp-376, Glu-389, and Asn-391 together coordinate Mg(2+). Residue His-392 participates in a protein binding. Positions 401-482 (RLDREVKDAL…LGGYRRIYPG (82 aa)) are c-MTBD region. Residue Lys-407 participates in L-glutamate binding. Coiled-coil stretches lie at residues 504 to 541 (ASKA…KEQN) and 585 to 609 (QDIV…IRSL). The tract at residues 519 to 556 (IRLKQEQQENPGTKKRKENKEQNQGESAGEKSRSRTAT) is disordered. A compositionally biased stretch (basic and acidic residues) spans 536–551 (ENKEQNQGESAGEKSR).

Belongs to the tubulin--tyrosine ligase family. Mg(2+) serves as cofactor. As to expression, highly expressed in heart and testis. Expressed in brain, kidney, liver, lung, muscle and trachea. In the brain, expressed in ependymal cilia, cortex, corpus callosum and striatum.

The enzyme catalyses (L-glutamyl)(n)-gamma-L-glutamyl-L-glutamyl-[protein] + L-glutamate + ATP = (L-glutamyl)(n+1)-gamma-L-glutamyl-L-glutamyl-[protein] + ADP + phosphate + H(+). Polyglutamylase which modifies tubulin, generating polyglutamate side chains of variable lengths on the gamma-carboxyl group of specific glutamate residues within the C-terminal tail of tubulin. Mediates ATP-dependent polyglutamate side-chain elongation of the polyglutamylation reaction but not the initiation step. Preferentially modifies the alpha-tubulin tail over a beta-tail. The chain is Tubulin polyglutamylase TTLL13 from Mus musculus (Mouse).